The chain runs to 798 residues: Protocadherin beta-14 (798 aa).

Positions 1–26 are cleaved as a signal peptide; it reads MEIRGALDLRKRQVLIFLVLLGLSRA. Residues 27 to 686 are Extracellular-facing; that stretch reads GTESAHYSVA…APAQAQADSL (660 aa). Cadherin domains are found at residues 35–133, 138–242, 247–347, 352–451, and 456–561; these read VAEE…SPTF, ILIK…APEF, YEVQ…PPEV, ITKR…APAF, and YTLF…SPFV. C96 and C102 form a disulfide bridge. N169 carries N-linked (GlcNAc...) asparagine glycosylation. 3 N-linked (GlcNAc...) asparagine glycosylation sites follow: N359, N418, and N436. An N-linked (GlcNAc...) asparagine glycan is attached at N567. Residues 568 to 671 form the Cadherin 6 domain; that stretch reads GSAPCTELVP…LVDGFSQPYL (104 aa). The helical transmembrane segment at 687–711 threads the bilayer; it reads TVYLVVALASVSSLFLFSVLLFVAV. Over 712–798 the chain is Cytoplasmic; the sequence is RLCRRSRAAS…FRNSFGLNIQ (87 aa).

The protein resides in the cell membrane. Its function is as follows. Potential calcium-dependent cell-adhesion protein. May be involved in the establishment and maintenance of specific neuronal connections in the brain. The chain is Protocadherin beta-14 (PCDHB14) from Pan troglodytes (Chimpanzee).